We begin with the raw amino-acid sequence, 343 residues long: Anthranilate phosphoribosyltransferase (343 aa).

5-phospho-alpha-D-ribose 1-diphosphate-binding positions include glycine 84, 87–88, threonine 92, 94–97, 112–120, and serine 124; these read GD, NIST, and KHGNRSVSS. Glycine 84 contributes to the anthranilate binding site. Residue serine 96 coordinates Mg(2+). An anthranilate-binding site is contributed by asparagine 115. Position 170 (arginine 170) interacts with anthranilate. Mg(2+) contacts are provided by aspartate 229 and glutamate 230.

This sequence belongs to the anthranilate phosphoribosyltransferase family. As to quaternary structure, homodimer. Mg(2+) serves as cofactor.

It carries out the reaction N-(5-phospho-beta-D-ribosyl)anthranilate + diphosphate = 5-phospho-alpha-D-ribose 1-diphosphate + anthranilate. It functions in the pathway amino-acid biosynthesis; L-tryptophan biosynthesis; L-tryptophan from chorismate: step 2/5. Its function is as follows. Catalyzes the transfer of the phosphoribosyl group of 5-phosphorylribose-1-pyrophosphate (PRPP) to anthranilate to yield N-(5'-phosphoribosyl)-anthranilate (PRA). The protein is Anthranilate phosphoribosyltransferase of Stenotrophomonas maltophilia (strain R551-3).